We begin with the raw amino-acid sequence, 1150 residues long: MEKKAKESLRRYKKAARHSATHSSSSDSTSDSDSGSSSYSSTDSEQGVGGVGVGVGVPGGAGGPGGSGSVHGHPHTHGHGHHPRSAERHHRKKKSSRRGGSSSGDEPSSSRRKRDKRDHVQKKLVAKRNHIKRKLKEARLKKRAAAALSGHVHRSLSPTTRAKLKKLAERKRLRAASKEQRERDKLRVVQRDRERDHHRLGSSRSPPSSSTTTTTKIRIHQDIVGKRQKSPGLGSGLGGGSSSSSSRMHHQLMSREKIIIQTRARGRTPSLERERERERERERERERERHDLSLRERDRRDRERERAEREAARDKERAEALARCQERQRERERLAREKLRRQEEEEGGKRGGPGRDLDLPPYGSRERSLDTVERERERERSGRHVRDKRELDPYEREQEYLEERHGHGLIDEMRRYRRRDLSPMPEHYAPRLRDPRELYSEEERERAYKRAYLDARYSSREREAWLEARELRERELQGREYRDLETEDTLYPDERERLIRDRERDRERERDRERERNIGPRGDFRPEWEREWEEEGAGGGPGGPSGTPGRPGGFVGGPKRGKPPAHAGGGPPSQQQHHSASEPDWDADERERERERERDRERERDREDRPDTGGGGAGGDRPSIKNEPAWLEHDQREKPRGWQQQSSNSGGDWRDNDDAPPAPSHPHPASPHHHVHPRGERGSGRGFRRGGHGHGDHGERPGYRSHPPPLMTLPVQPPGGYSRGFPHKRLPYGSGRDGAALGARDGGLPGSSTFLKKHTHAPLVSPTQTPLLNPLLNAAKPNAAAQASAVAAATTAVAAAKAAAQSAANATTNPGILAQVSKLNTVCIKQEDASEDSAGTPELGAQDSPTQSLNLNQSLSSEGNPVKQELIRTSAVEGELSEISDSDDDILNKTDKVRPKNELPTETEQEMDTNADEVKSEALHIVAGHPIKGEEGDEVLDFEEISDGELEEDARHKGIGDALGVDWQGLIAETRQQASDAQAAQQGVDRGTSAKQRWQPYRVLLDLGISFGMAGEGYARCVMEEARQQLLQEKEQGQQRELDGDEEPPAKIPSPLLDYREFLASQQQLEPLACVQMGLRSAAVERQRLVGNVCGPGSRALSARQDLRLRRQLCGLPARECEFPRSVPIVGEGLRNLAMQMFQRRLLDVK.

Residues 1-10 (MEKKAKESLR) are compositionally biased toward basic and acidic residues. 4 disordered regions span residues 1-444 (MEKK…EEER), 477-710 (QGRE…PPPL), 833-914 (ASED…MDTN), and 1034-1053 (KEQG…AKIP). Residues 11-20 (RYKKAARHSA) show a composition bias toward basic residues. Residues 21-44 (THSSSSDSTSDSDSGSSSYSSTDS) show a composition bias toward low complexity. Gly residues predominate over residues 47–69 (GVGGVGVGVGVPGGAGGPGGSGS). Residues 72–97 (GHPHTHGHGHHPRSAERHHRKKKSSR) are compositionally biased toward basic residues. Over residues 98–107 (RGGSSSGDEP) the composition is skewed to low complexity. Basic residues-rich tracts occupy residues 110-144 (SRRK…KKRA) and 162-175 (AKLK…RLRA). A coiled-coil region spans residues 122 to 147 (KKLVAKRNHIKRKLKEARLKKRAAAA). Over residues 176 to 199 (ASKEQRERDKLRVVQRDRERDHHR) the composition is skewed to basic and acidic residues. Residues 202–215 (SSRSPPSSSTTTTT) show a composition bias toward low complexity. Residues 269-347 (PSLERERERE…KLRRQEEEEG (79 aa)) are a coiled coil. Basic and acidic residues-rich tracts occupy residues 270 to 414 (SLER…DEMR), 428 to 444 (YAPR…EEER), and 492 to 529 (PDER…PEWE). Residues 537-558 (AGGGPGGPSGTPGRPGGFVGGP) are compositionally biased toward gly residues. Composition is skewed to basic and acidic residues over residues 589-611 (ERER…DRPD) and 630-640 (WLEHDQREKPR). Residues 660–669 (PPAPSHPHPA) are compositionally biased toward pro residues. The span at 693–702 (GHGDHGERPG) shows a compositional bias: basic and acidic residues. A compositionally biased stretch (low complexity) spans 851 to 861 (QSLNLNQSLSS). Acidic residues predominate over residues 879–889 (ELSEISDSDDD). The span at 890-903 (ILNKTDKVRPKNEL) shows a compositional bias: basic and acidic residues. Residues 905–914 (TETEQEMDTN) show a composition bias toward acidic residues.

Belongs to the ZC3H13 family. In terms of assembly, component of the WMM complex, a N6-methyltransferase complex composed of a catalytic subcomplex, named MAC, and of an associated subcomplex, named MACOM. The MAC subcomplex is composed of Ime4/Mettl3 and Mettl14. The MACOM subcomplex is composed of fl(2)d, Flacc/Xio, Hakai, vir, and, in some cases of nito. As to expression, widely expressed during embryogenesis but shows enrichment in the neuroectoderm.

The protein resides in the nucleus. Associated component of the WMM complex, a complex that mediates N6-methyladenosine (m6A) methylation of mRNAs, a modification that plays a role in the efficiency of mRNA splicing and is required for sex determination. In the WMM complex, acts as a key regulator of m6A methylation by bridging fl(2)d to the RNA-binding component nito. Required for sex determination and dosage compensation via Sxl alternative splicing: m6A methylation acts as a key regulator of Sxl pre-mRNA and promotes female-specific alternative splicing of Sxl, which determines female physiognomy. In Drosophila melanogaster (Fruit fly), this protein is Fl(2)d-associated complex component.